A 379-amino-acid polypeptide reads, in one-letter code: uncharacterized protein (379 aa).

This is an uncharacterized protein from Sinorhizobium fredii (strain NBRC 101917 / NGR234).